Consider the following 486-residue polypeptide: Pentatricopeptide repeat-containing protein At2g01860 (486 aa).

The disordered stretch occupies residues glutamine 111 to threonine 137. PPR repeat units lie at residues aspartate 290–arginine 321, serine 327–proline 361, serine 362–leucine 396, aspartate 397–proline 431, and threonine 432–leucine 466.

This sequence belongs to the PPR family. P subfamily.

The protein is Pentatricopeptide repeat-containing protein At2g01860 (EMB975) of Arabidopsis thaliana (Mouse-ear cress).